The sequence spans 335 residues: Phosphate acyltransferase (335 aa).

This sequence belongs to the PlsX family. As to quaternary structure, homodimer. Probably interacts with PlsY.

It localises to the cytoplasm. It carries out the reaction a fatty acyl-[ACP] + phosphate = an acyl phosphate + holo-[ACP]. It participates in lipid metabolism; phospholipid metabolism. Catalyzes the reversible formation of acyl-phosphate (acyl-PO(4)) from acyl-[acyl-carrier-protein] (acyl-ACP). This enzyme utilizes acyl-ACP as fatty acyl donor, but not acyl-CoA. In Desulfitobacterium hafniense (strain Y51), this protein is Phosphate acyltransferase.